Consider the following 304-residue polypeptide: E3 ubiquitin-protein ligase RNF115 (304 aa).

Position 2 is an N-acetylalanine (A2). Positions 95–138 (PLDQDNRANERGHQTHTDFWGARPPRLPLGRRYRSRGSSRPDRS) are disordered. Residues 98 to 110 (QDNRANERGHQTH) are compositionally biased toward basic and acidic residues. S132 and S133 each carry phosphoserine; by PKB/AKT1. The segment at 228–269 (CPVCKEDYTVEEEVRQLPCNHFFHSSCIVPWLELHDTCPVCR) adopts an RING-type zinc-finger fold. Positions 272–304 (LNGEDSTRQSQSTEASASNRFSNDSQLHDRWTF) are disordered. Residues 279–296 (RQSQSTEASASNRFSNDS) show a composition bias toward polar residues.

As to quaternary structure, interacts with RAB7A. Interacts with EGFR and FLT3. Interacts with BST2. Interacts with STX17. Interacts with YWHAE. In terms of processing, phosphorylated by AKT1, allowing association with the 14-3-3 chaperones that facilitates associating with TLRs. Post-translationally, RING-type zinc finger-dependent and E2-dependent autoubiquitination. Deubiquitinated by USP9X; antogonizing its autoubiquitination and subsequent proteasomal degradation. In terms of tissue distribution, expressed at extremely low levels in normal breast, prostate, lung, colon. Higher levels of expression are detected in heart, skeletal muscle, testis as well as in breast and prostate cancer cells.

It localises to the cytoplasm. Its subcellular location is the nucleus. It is found in the endoplasmic reticulum. The protein localises to the golgi apparatus. It carries out the reaction S-ubiquitinyl-[E2 ubiquitin-conjugating enzyme]-L-cysteine + [acceptor protein]-L-lysine = [E2 ubiquitin-conjugating enzyme]-L-cysteine + N(6)-ubiquitinyl-[acceptor protein]-L-lysine.. It functions in the pathway protein modification; protein ubiquitination. Functionally, E3 ubiquitin-protein ligase that catalyzes the 'Lys-48'- and/or 'Lys-63'-linked polyubiquitination of various substrates and thereby plays a role in a number of signaling pathways including autophagy, innate immunity, cell proliferation and cell death. Plays a role in the endosomal trafficking and degradation of membrane receptors including EGFR, FLT3, MET and CXCR4 through their polyubiquitination. Participates together with BST2 in antiviral immunity by facilitating the internalization of HIV-1 virions into intracellular vesicles leading to their lysosomal degradation. Also possesses an antiviral activity independently of BST2 by promoting retroviral GAG proteins ubiquitination, redistribution to endo-lysosomal compartments and, ultimately, lysosomal degradation. Catalyzes distinct types of ubiquitination on MAVS and STING1 at different phases of viral infection to promote innate antiviral response. Mediates the 'Lys-48'-linked ubiquitination of MAVS leading to its proteasomal degradation and ubiquitinates STING1 via 'Lys-63'-linked polyubiquitination, critical for its oligomerization and the subsequent recruitment of TBK1. Plays a positive role in the autophagosome-lysosome fusion by interacting with STX17 and enhancing its stability without affecting 'Lys-48'- or 'Lys-63'-linked polyubiquitination levels, which in turn promotes autophagosome maturation. Negatively regulates TLR-induced expression of proinflammatory cytokines by catalyzing 'Lys-11'-linked ubiquitination of RAB1A and RAB13 to inhibit post-ER trafficking of TLRs to the Golgi by RAB1A and subsequently from the Golgi apparatus to the cell surface by RAB13. The sequence is that of E3 ubiquitin-protein ligase RNF115 from Homo sapiens (Human).